We begin with the raw amino-acid sequence, 486 residues long: Surface lipoprotein assembly modifier (486 aa).

The first 29 residues, 1–29 (MKNGVKQISFLSLIGLSLIGLSLTNIAWA), serve as a signal peptide directing secretion. An N-terminal domain region spans residues 30–197 (KVARPKNDTL…QYLLTLNQRN (168 aa)). A C-terminal probable beta barrel region spans residues 198–486 (QWIWQVGLNF…RIYLEIGKIF (289 aa)). The next 14 membrane-spanning stretches (beta stranded) occupy residues 199 to 209 (WIWQVGLNFLN), 237 to 248 (GRVFFISRKKWP), 253 to 262 (FFSKTMFNGN), 276 to 286 (TLRIGGGLGYQ), 290 to 300 (VEVSLFPFQEK), 320 to 330 (LGIRLENVDWL), 334 to 344 (WQISTALEYGE), 358 to 367 (YFISSTLFYL), 373 to 382 (FWFVGMDFHR), 395 to 404 (KTLRLGWGQD), 409 to 419 (ISSRLTFSYAN), 437 to 446 (YATTITLWHR), 453 to 463 (LTPKLSWDYQK), and 476 to 486 (NRIYLEIGKIF).

It belongs to the Slam family.

It localises to the cell outer membrane. In terms of biological role, required for correct export to the cell surface of some cell outer membrane lipoproteins (tested with TpbP) upon heterologous expression in E.coli and probably also in Haemophilus. The protein is Surface lipoprotein assembly modifier of Haemophilus influenzae (strain 86-028NP).